The sequence spans 876 residues: DNA polymerase 1 (876 aa).

This sequence belongs to the DNA polymerase type-B family.

It catalyses the reaction DNA(n) + a 2'-deoxyribonucleoside 5'-triphosphate = DNA(n+1) + diphosphate. In terms of biological role, this polymerase possesses two enzymatic activities: DNA synthesis (polymerase) and an exonucleolytic activity that degrades single-stranded DNA in the 3'- to 5'-direction. This is DNA polymerase 1 (dpo1) from Sulfolobus acidocaldarius (strain ATCC 33909 / DSM 639 / JCM 8929 / NBRC 15157 / NCIMB 11770).